We begin with the raw amino-acid sequence, 141 residues long: Nucleoside diphosphate kinase (141 aa).

Lys11, Phe59, Arg87, Thr93, Arg104, and Asn114 together coordinate ATP. The active-site Pros-phosphohistidine intermediate is the His117.

Belongs to the NDK family. In terms of assembly, homotetramer. Mg(2+) is required as a cofactor.

The protein localises to the cytoplasm. It catalyses the reaction a 2'-deoxyribonucleoside 5'-diphosphate + ATP = a 2'-deoxyribonucleoside 5'-triphosphate + ADP. It carries out the reaction a ribonucleoside 5'-diphosphate + ATP = a ribonucleoside 5'-triphosphate + ADP. Major role in the synthesis of nucleoside triphosphates other than ATP. The ATP gamma phosphate is transferred to the NDP beta phosphate via a ping-pong mechanism, using a phosphorylated active-site intermediate. The polypeptide is Nucleoside diphosphate kinase (Vibrio campbellii (strain ATCC BAA-1116)).